The chain runs to 393 residues: Phosphoenolpyruvate/phosphate translocator 3, chloroplastic (393 aa).

The N-terminal 65 residues, 1–65 (MQRAAAASRA…LSGGRAVTAR (65 aa)), are a transit peptide targeting the chloroplast. 7 helical membrane passes run 89-109 (LAET…NIYF), 124-144 (YTIT…MWAL), 164-183 (AAGH…KVAV), 195-217 (FFTV…LGSL), 232-249 (LSFN…NLLY), 270-290 (INLF…LMLF), and 362-382 (TPIS…VFLY). The EamA domain maps to 123 to 228 (PYTITAFQLA…PIVGGVALAS (106 aa)).

This sequence belongs to the TPT transporter family. PPT (TC 2.A.7.9) subfamily.

The protein localises to the plastid. It localises to the chloroplast membrane. Its function is as follows. Phosphoenolpyruvate/phosphate translocator that transports phosphoenolpyruvate (PEP) and dihydroxyacetone phosphate. The protein is Phosphoenolpyruvate/phosphate translocator 3, chloroplastic (PPT3) of Oryza sativa subsp. japonica (Rice).